A 127-amino-acid chain; its full sequence is MTLLNTLSNFGGTWPRLIIMSMINYFTVYQCTIPGTNKVYVTHGGSMQACTELLNGTVTILRDGYYITNLICIVVGLFLYFGYLKRKILHLQSLPISSWRFFHFFFTILAVTSRAIYYKSQNWRREC.

Helical transmembrane passes span 64-84 (GYYI…FGYL) and 101-118 (FFHF…AIYY).

It is found in the membrane. This is an uncharacterized protein from Saccharomyces cerevisiae (strain ATCC 204508 / S288c) (Baker's yeast).